The sequence spans 246 residues: Large ribosomal subunit protein uL2 (246 aa).

Residues 197 to 227 form a disordered region; that stretch reads SPYAHPHGGGSHQKGGTPVPKTAPPGQKVGF.

It belongs to the universal ribosomal protein uL2 family. In terms of assembly, part of the 50S ribosomal subunit. Forms a bridge to the 30S subunit in the 70S ribosome.

Its function is as follows. One of the primary rRNA binding proteins. Required for association of the 30S and 50S subunits to form the 70S ribosome, for tRNA binding and peptide bond formation. It has been suggested to have peptidyltransferase activity; this is somewhat controversial. Makes several contacts with the 16S rRNA in the 70S ribosome. The polypeptide is Large ribosomal subunit protein uL2 (Pyrobaculum aerophilum (strain ATCC 51768 / DSM 7523 / JCM 9630 / CIP 104966 / NBRC 100827 / IM2)).